A 308-amino-acid chain; its full sequence is Phosphatidate cytidylyltransferase (308 aa).

Transmembrane regions (helical) follow at residues 30–50 (FLVL…LGFI), 73–93 (PLST…FLSI), 100–120 (PGFF…WSIF), 127–147 (IGAL…GIPI), 167–187 (IWWA…GYFF), 205–225 (TVVG…IFFL), 235–255 (FPMP…GFFG), and 280–300 (MLDT…FLLI).

The protein belongs to the CDS family.

The protein localises to the cell membrane. It carries out the reaction a 1,2-diacyl-sn-glycero-3-phosphate + CTP + H(+) = a CDP-1,2-diacyl-sn-glycerol + diphosphate. It functions in the pathway phospholipid metabolism; CDP-diacylglycerol biosynthesis; CDP-diacylglycerol from sn-glycerol 3-phosphate: step 3/3. This Chlamydia pneumoniae (Chlamydophila pneumoniae) protein is Phosphatidate cytidylyltransferase (cdsA).